Reading from the N-terminus, the 268-residue chain is Oxygen-evolving enhancer protein 2-1, chloroplastic (268 aa).

A chloroplast-targeting transit peptide spans 1 to 82; sequence MASTQCFLHQ…IGSKVSPADA (82 aa).

This sequence belongs to the PsbP family.

It localises to the plastid. Its subcellular location is the chloroplast thylakoid membrane. May be involved in the regulation of photosystem II. This chain is Oxygen-evolving enhancer protein 2-1, chloroplastic (PSBP1), found in Nicotiana tabacum (Common tobacco).